The chain runs to 200 residues: Oligoribonuclease (200 aa).

The region spanning 5–169 is the Exonuclease domain; sequence MVWIDCEMTG…ADIRESIAEL (165 aa). The active site involves Tyr126.

Belongs to the oligoribonuclease family.

It localises to the cytoplasm. Its function is as follows. 3'-to-5' exoribonuclease specific for small oligoribonucleotides. The protein is Oligoribonuclease of Streptomyces avermitilis (strain ATCC 31267 / DSM 46492 / JCM 5070 / NBRC 14893 / NCIMB 12804 / NRRL 8165 / MA-4680).